The following is a 625-amino-acid chain: Prothrombin (625 aa).

Positions 1-24 are cleaved as a signal peptide; the sequence is MARVRGPRLPGCLALAALFSLVHS. A propeptide spanning residues 25 to 43 is cleaved from the precursor; the sequence is QHVFLAHQQASSLLQRARR. The Gla domain maps to 44–90; it reads ANKGFLEEVRKGNLERECLEEPCSREEAFEALESLSATDAFWAKYTA. Residues E50, E51, E58, E60, E63, E64, E69, E70, E73, and E76 each carry the 4-carboxyglutamate modification. C61 and C66 form a disulfide bridge. Cystine bridges form between C91–C104, C109–C187, C130–C170, C158–C182, C214–C292, C235–C275, C263–C287, C339–C485, C394–C410, C539–C553, and C567–C597. 2 Kringle domains span residues 109-187 and 214-292; these read CAEG…VPVC and CVPD…LNYC. N-linked (GlcNAc...) asparagine glycans are attached at residues N120 and N144. The Peptidase S1 domain maps to 367–621; it reads IVEGQDAEVG…LKKWIQKVID (255 aa). Catalysis depends on H409, which acts as the Charge relay system. A glycan (N-linked (GlcNAc...) asparagine) is linked at N419. The active-site Charge relay system is D465. Residues 554–576 form a high affinity receptor-binding region which is also known as the TP508 peptide region; sequence AGYKPGEGKRGDACEGDSGGPFV. Residue S571 is the Charge relay system of the active site.

The protein belongs to the peptidase S1 family. In terms of assembly, heterodimer (named alpha-thrombin) of a light and a heavy chain; disulfide-linked. Forms a heterodimer with SERPINA5. In plasma, interacts (via N-terminus) with alpha-1-microglobulin; this interaction does not prevent the activation of prothrombin to thrombin. In terms of processing, the gamma-carboxyglutamyl residues, which bind calcium ions, result from the carboxylation of glutamyl residues by a microsomal enzyme, the vitamin K-dependent carboxylase. The modified residues are necessary for the calcium-dependent interaction with a negatively charged phospholipid surface, which is essential for the conversion of prothrombin to thrombin. Post-translationally, in the penultimate step of the coagulation cascade, prothrombin is converted to thrombin by the prothrombinase complex composed of factor Xa (F10), cofactor Va (F5), and phospholipids. This activation requires factor Xa-catalyzed sequential cleavage at 2 sites, Arg-317 and Arg-366, along 2 possible pathways. In the first pathway, the first cleavage occurs at Arg-317, leading to the formation of the inactive intermediate prethrombin-2. This pathway preferentially occurs on platelets and in the absence of cofactor Va. In the second pathway, the first cleavage occurs at Arg-366, which separates protease domain into 2 chains that remain connected through a disulfide bond and generates the active intermediate meizothrombin. The presence of cofactor Va directs activation along the meizothrombin pathway and greatly accelerates the rate of cleavage at Arg-366, but has a smaller effect on the cleavage of meizothrombin at Arg-317. Meizothrombin accumulates as an intermediate when prothrombinase is assembled on the membrane of red blood cells. Expressed by the liver and secreted in plasma.

It is found in the secreted. It localises to the extracellular space. It carries out the reaction Selective cleavage of Arg-|-Gly bonds in fibrinogen to form fibrin and release fibrinopeptides A and B.. Activity is promoted in the presence of negatively charged surfaces, such as polyphosphate and dextran sulfate. Inhibited by SERPINA5. In terms of biological role, thrombin, which cleaves bonds after Arg and Lys, converts fibrinogen to fibrin and activates factors V, VII, VIII, XIII, and, in complex with thrombomodulin, protein C. Functions in blood homeostasis, inflammation and wound healing. Activates coagulation factor XI (F11); activation is promoted by the contact with negatively charged surfaces. Triggers the production of pro-inflammatory cytokines, such as MCP-1/CCL2 and IL8/CXCL8, in endothelial cells. This Bos taurus (Bovine) protein is Prothrombin (F2).